The chain runs to 131 residues: MRHRHGLRKLNRTSSHRLAMLRNMSNSLIEHEVIKTTLPKAKELRKVVEPLITLGKKPSLANRRLAFNRLRDRDSVTKLFDVLGPRFANRPGGYLRILKFGFRVGDNAPMALVELLDRPEVEEVENVAEAE.

Belongs to the bacterial ribosomal protein bL17 family. Part of the 50S ribosomal subunit. Contacts protein L32.

The sequence is that of Large ribosomal subunit protein bL17 from Paraburkholderia phymatum (strain DSM 17167 / CIP 108236 / LMG 21445 / STM815) (Burkholderia phymatum).